Consider the following 133-residue polypeptide: ATP synthase epsilon chain (133 aa).

The protein belongs to the ATPase epsilon chain family. In terms of assembly, F-type ATPases have 2 components, CF(1) - the catalytic core - and CF(0) - the membrane proton channel. CF(1) has five subunits: alpha(3), beta(3), gamma(1), delta(1), epsilon(1). CF(0) has three main subunits: a, b and c.

It localises to the cell membrane. Functionally, produces ATP from ADP in the presence of a proton gradient across the membrane. This Clostridium botulinum (strain ATCC 19397 / Type A) protein is ATP synthase epsilon chain.